The chain runs to 3799 residues: Polyketide synthase GfsE (3799 aa).

In terms of domain architecture, Ketosynthase family 3 (KS3) 1 spans 33 to 459 (HEPIAIIGMS…GTNAHAILEE (427 aa)). 2 module regions span residues 33–1730 (HEPI…RSSA) and 1749–3494 (DEAI…RTDL). Residues Cys-206, His-341, and His-381 each act as for beta-ketoacyl synthase 1 activity in the active site. Positions 462–496 (AATGNPTEADTDQEPAASASPDRTTTLPAVPWPLS) are disordered. One can recognise a Malonyl-CoA:ACP transacylase (MAT) 1 domain in the interval 582 to 895 (FVFPGQGSQW…LGEAHAHGAD (314 aa)). Positions 944–1069 (HPLFGAVVEV…GVLELEARPE (126 aa)) are N-terminal hotdog fold 1. Residues 944–1222 (HPLFGAVVEV…SRPVAEEQLG (279 aa)) enclose the PKS/mFAS DH 1 domain. The active-site Proton acceptor; for dehydratase activity 1 is His-976. The C-terminal hotdog fold 1 stretch occupies residues 1081 to 1222 (AEVVPVEGLY…SRPVAEEQLG (142 aa)). Asp-1142 serves as the catalytic Proton donor; for dehydratase activity 1. The Ketoreductase (KR) 1 domain maps to 1382–1554 (LLVTGASGVL…TSLSWGLWAE (173 aa)). In terms of domain architecture, Carrier 1 spans 1652 to 1730 (EAERAVLELV…ALATHIRSSA (79 aa)). The residue at position 1690 (Ser-1690) is an O-(pantetheine 4'-phosphoryl)serine. One can recognise a Ketosynthase family 3 (KS3) 2 domain in the interval 1749–2174 (DEAIAIVGMA…GTNAHVILEQ (426 aa)). Active-site for beta-ketoacyl synthase 2 activity residues include Cys-1921, His-2056, and His-2096. In terms of domain architecture, Malonyl-CoA:ACP transacylase (MAT) 2 spans 2284–2604 (FVFPGQGSQW…VSLAKVHTHG (321 aa)). Residues 2656–2781 (HPLLTGVVDL…GTLAVDADHD (126 aa)) are N-terminal hotdog fold 2. The PKS/mFAS DH 2 domain maps to 2656 to 2936 (HPLLTGVVDL…TRPVTAAQFA (281 aa)). His-2688 (proton acceptor; for dehydratase activity 2) is an active-site residue. A C-terminal hotdog fold 2 region spans residues 2794–2936 (ADPVDLTEVY…TRPVTAAQFA (143 aa)). Asp-2855 acts as the Proton donor; for dehydratase activity 2 in catalysis. A Ketoreductase (KR) 2 domain is found at 3142 to 3314 (LLVTGASGVL…TALSWGLWAE (173 aa)). One can recognise a Carrier 2 domain in the interval 3419–3494 (AALLDLVGAQ…ALAAQLRTDL (76 aa)). Position 3454 is an O-(pantetheine 4'-phosphoryl)serine (Ser-3454).

The cofactor is pantetheine 4'-phosphate.

It participates in antibiotic biosynthesis. Functionally, fifth protein in the synthesis of the 16-membered macrolide antibiotics FD-891 and FD-892. Composed of 2 modules. Modifies the product of GfsD by multiple rounds of addition of methylmalonyl-CoA and other modifications to help generate the final products. In Streptomyces halstedii, this protein is Polyketide synthase GfsE.